Here is a 274-residue protein sequence, read N- to C-terminus: 4-hydroxy-3-methylbut-2-enyl diphosphate reductase (274 aa).

A [4Fe-4S] cluster-binding site is contributed by C12. (2E)-4-hydroxy-3-methylbut-2-enyl diphosphate-binding residues include H36 and H70. Dimethylallyl diphosphate is bound by residues H36 and H70. Residues H36 and H70 each coordinate isopentenyl diphosphate. C92 contacts [4Fe-4S] cluster. Residue H120 participates in (2E)-4-hydroxy-3-methylbut-2-enyl diphosphate binding. Dimethylallyl diphosphate is bound at residue H120. An isopentenyl diphosphate-binding site is contributed by H120. E122 acts as the Proton donor in catalysis. T158 serves as a coordination point for (2E)-4-hydroxy-3-methylbut-2-enyl diphosphate. C186 contacts [4Fe-4S] cluster. (2E)-4-hydroxy-3-methylbut-2-enyl diphosphate is bound by residues S214, S215, N216, and S258. Residues S214, S215, N216, and S258 each contribute to the dimethylallyl diphosphate site. 4 residues coordinate isopentenyl diphosphate: S214, S215, N216, and S258.

It belongs to the IspH family. The cofactor is [4Fe-4S] cluster.

The enzyme catalyses isopentenyl diphosphate + 2 oxidized [2Fe-2S]-[ferredoxin] + H2O = (2E)-4-hydroxy-3-methylbut-2-enyl diphosphate + 2 reduced [2Fe-2S]-[ferredoxin] + 2 H(+). It carries out the reaction dimethylallyl diphosphate + 2 oxidized [2Fe-2S]-[ferredoxin] + H2O = (2E)-4-hydroxy-3-methylbut-2-enyl diphosphate + 2 reduced [2Fe-2S]-[ferredoxin] + 2 H(+). The protein operates within isoprenoid biosynthesis; dimethylallyl diphosphate biosynthesis; dimethylallyl diphosphate from (2E)-4-hydroxy-3-methylbutenyl diphosphate: step 1/1. Its pathway is isoprenoid biosynthesis; isopentenyl diphosphate biosynthesis via DXP pathway; isopentenyl diphosphate from 1-deoxy-D-xylulose 5-phosphate: step 6/6. In terms of biological role, catalyzes the conversion of 1-hydroxy-2-methyl-2-(E)-butenyl 4-diphosphate (HMBPP) into a mixture of isopentenyl diphosphate (IPP) and dimethylallyl diphosphate (DMAPP). Acts in the terminal step of the DOXP/MEP pathway for isoprenoid precursor biosynthesis. This Campylobacter curvus (strain 525.92) protein is 4-hydroxy-3-methylbut-2-enyl diphosphate reductase.